Reading from the N-terminus, the 58-residue chain is UPF0434 protein Swoo_1821 (58 aa).

It belongs to the UPF0434 family.

This Shewanella woodyi (strain ATCC 51908 / MS32) protein is UPF0434 protein Swoo_1821.